Here is a 314-residue protein sequence, read N- to C-terminus: RNA 2'-O-methyltransferase FBLL1 (314 aa).

Gly residues predominate over residues 1-59 (MKPAGGRGGWGWGGGKGGSKGGDTGSGTKGGFGARTRGSSGGGRGRGRGGGGGGGGGGG). The tract at residues 1–82 (MKPAGGRGGW…RRKKGITVSV (82 aa)) is disordered. Arg-7 is subject to Omega-N-methylarginine. A compositionally biased stretch (basic residues) spans 64-77 (RGGPGKNKNRRKKG). S-adenosyl-L-methionine contacts are provided by residues 166–167 (TT), 185–186 (EF), 210–211 (DA), and 230–233 (DVAQ).

Belongs to the methyltransferase superfamily. Fibrillarin family. Component of a box C/D small nucleolar ribonucleoprotein (snoRNP) complex composed of FBLL1, SNU13/NHP2L1, NOP56 and NOP58 and a guide snoRNA which mediates 2'-hydroxyl ribose methylation in RNAs.

It is found in the nucleus. The protein localises to the nucleolus. The enzyme catalyses a ribonucleotide in RNA + S-adenosyl-L-methionine = a 2'-O-methylribonucleotide in RNA + S-adenosyl-L-homocysteine + H(+). S-adenosyl-L-methionine-dependent RNA methyltransferase that catalyzes 2'-hydroxyl ribose methylation in RNAs. Functions as part of box C/D small nucleolar ribonucleoprotein (snoRNP) complexes, where guide snoRNAs ensure methylation specificity through base pairing with RNA substrates. Exhibits broad substrate specificity, methylating multiple sites on ribosomal RNAs (rRNAs) and messenger RNAs (mRNAs) depending on the guide snoRNA incorporated in the complex. Specifically expressed in brain, it regulates the expression of GAP43 by stabilizing its mRNA through methylation and thereby plays an indirect role in neuronal differentiation. This chain is RNA 2'-O-methyltransferase FBLL1, found in Mus musculus (Mouse).